The primary structure comprises 186 residues: Large ribosomal subunit protein uL5 (186 aa).

The protein belongs to the universal ribosomal protein uL5 family. In terms of assembly, part of the 50S ribosomal subunit; part of the 5S rRNA/L5/L18/L25 subcomplex. Contacts the 5S rRNA and the P site tRNA. Forms a bridge to the 30S subunit in the 70S ribosome.

Its function is as follows. This is one of the proteins that bind and probably mediate the attachment of the 5S RNA into the large ribosomal subunit, where it forms part of the central protuberance. In the 70S ribosome it contacts protein S13 of the 30S subunit (bridge B1b), connecting the 2 subunits; this bridge is implicated in subunit movement. Contacts the P site tRNA; the 5S rRNA and some of its associated proteins might help stabilize positioning of ribosome-bound tRNAs. The chain is Large ribosomal subunit protein uL5 from Phenylobacterium zucineum (strain HLK1).